The primary structure comprises 724 residues: Probable serine/threonine-protein kinase KKQ8 (724 aa).

Disordered stretches follow at residues 1–81 and 93–188; these read MVMQ…RQRS and HPFR…KDIL. Ser19 carries the phosphoserine modification. The span at 45–54 shows a compositional bias: low complexity; sequence PYRSSSTSPK. Positions 95-106 are enriched in polar residues; it reads FRQTGSGASNSP. Residues 143-162 show a composition bias toward low complexity; sequence RSSSVSSCDSSNGTTSSSDS. 3 positions are modified to phosphoserine: Ser232, Ser238, and Ser241. Composition is skewed to polar residues over residues 318-329 and 338-351; these read NASSLLPNVEKS and GQSPNDSNRSSPTQ. The disordered stretch occupies residues 318 to 355; that stretch reads NASSLLPNVEKSQTNHEKRTGQSPNDSNRSSPTQGRED. Residues 412–712 enclose the Protein kinase domain; it reads GHPVGLVGAG…VGKLLDMQWM (301 aa). ATP is bound by residues 418–426 and Lys455; that span reads VGAGAYGEV. Asp563 (proton acceptor) is an active-site residue.

This sequence belongs to the protein kinase superfamily. CAMK Ser/Thr protein kinase family. NPR/HAL subfamily. HAL5 sub-subfamily.

It localises to the cytoplasm. The enzyme catalyses L-seryl-[protein] + ATP = O-phospho-L-seryl-[protein] + ADP + H(+). It catalyses the reaction L-threonyl-[protein] + ATP = O-phospho-L-threonyl-[protein] + ADP + H(+). The protein is Probable serine/threonine-protein kinase KKQ8 (KKQ8) of Saccharomyces cerevisiae (strain YJM789) (Baker's yeast).